Here is a 323-residue protein sequence, read N- to C-terminus: tRNA dimethylallyltransferase (323 aa).

12 to 19 (GPTASGKT) provides a ligand contact to ATP. Residue 14–19 (TASGKT) participates in substrate binding. Interaction with substrate tRNA regions lie at residues 37–40 (DSAL) and 161–165 (QRLVR).

Belongs to the IPP transferase family. In terms of assembly, monomer. Mg(2+) is required as a cofactor.

It catalyses the reaction adenosine(37) in tRNA + dimethylallyl diphosphate = N(6)-dimethylallyladenosine(37) in tRNA + diphosphate. Its function is as follows. Catalyzes the transfer of a dimethylallyl group onto the adenine at position 37 in tRNAs that read codons beginning with uridine, leading to the formation of N6-(dimethylallyl)adenosine (i(6)A). This Stutzerimonas stutzeri (strain A1501) (Pseudomonas stutzeri) protein is tRNA dimethylallyltransferase.